The primary structure comprises 163 residues: Allophycocyanin alpha-B chain (163 aa).

An N4-methylasparagine modification is found at Asn71. Cys81 is a (2R,3E)-phycocyanobilin binding site.

Belongs to the phycobiliprotein family. Heterodimer of an alpha and a beta chain. Contains one covalently linked bilin chromophore.

The protein resides in the cellular thylakoid membrane. In terms of biological role, light-harvesting photosynthetic bile pigment-protein from the phycobiliprotein complex. Allophycocyanin has a maximum absorption at approximately 650 nanometers. This Synechococcus sp. (strain ATCC 27144 / PCC 6301 / SAUG 1402/1) (Anacystis nidulans) protein is Allophycocyanin alpha-B chain.